The primary structure comprises 567 residues: Lipase maturation factor 1 (567 aa).

The segment at 1 to 39 (MRPDSPTMAAPAESLRRRKTGYSDPEPESPPAPGRGPAG) is disordered. The Cytoplasmic portion of the chain corresponds to 1-49 (MRPDSPTMAAPAESLRRRKTGYSDPEPESPPAPGRGPAGSPAHLHTGTF). Residues 50–72 (WLTRIVLLKALAFVYFVAFLVAF) form a helical membrane-spanning segment. The Lumenal portion of the chain corresponds to 73–127 (HQNKQLIGDRGLLPCRVFLKNFQQYFQDRTSWEVFSYMPTILWLMDWSDMNSNLD). Residues 128–151 (LLALLGLGISSFVLITGCANMLLM) traverse the membrane as a helical segment. Residues 152-207 (AALWGLYMSLVNVGHVWYSFGWESQLLETGFLGIFLCPLWTLSRLPQHTPTSRIVL) lie on the Cytoplasmic side of the membrane. Residues 208-221 (WGFRWLIFRIMLGA) traverse the membrane as a helical segment. Topologically, residues 222-292 (GLIKIRGDRC…LGRRACIIHG (71 aa)) are lumenal. The chain crosses the membrane as a helical span at residues 293–321 (VLQILFQAVLIVSGNLSFLNWLTMVPSLA). Residues 322–367 (CFDDATLGFLFPSGPGSLKDRVLQMQRDIRGARPEPRFGSVVRRAA) are Cytoplasmic-facing. A helical membrane pass occupies residues 368 to 388 (NVSLGVLLAWLSVPVVLNLLS). Residues 389 to 567 (SRQVMNTHFN…DRGWPLPGPL (179 aa)) lie on the Lumenal side of the membrane.

Belongs to the lipase maturation factor family. As to quaternary structure, interacts with LPL and SEL1L.

Its subcellular location is the endoplasmic reticulum membrane. Its function is as follows. Involved in the maturation of specific proteins in the endoplasmic reticulum. Required for maturation and transport of active lipoprotein lipase (LPL) through the secretory pathway. Each LMF1 molecule chaperones 50 or more molecules of LPL. The chain is Lipase maturation factor 1 (LMF1) from Homo sapiens (Human).